Consider the following 182-residue polypeptide: ATP-dependent protease subunit HslV (182 aa).

T12 is a catalytic residue. The Na(+) site is built by A167, C170, and T173.

The protein belongs to the peptidase T1B family. HslV subfamily. A double ring-shaped homohexamer of HslV is capped on each side by a ring-shaped HslU homohexamer. The assembly of the HslU/HslV complex is dependent on binding of ATP.

The protein localises to the cytoplasm. It carries out the reaction ATP-dependent cleavage of peptide bonds with broad specificity.. Allosterically activated by HslU binding. Its function is as follows. Protease subunit of a proteasome-like degradation complex believed to be a general protein degrading machinery. The chain is ATP-dependent protease subunit HslV from Chlorobium chlorochromatii (strain CaD3).